A 396-amino-acid chain; its full sequence is Phosphoglycerate kinase (396 aa).

Substrate contacts are provided by residues 21-23 (DLN), R36, 59-62 (HFGR), R118, and R151. Residues K201, E323, and 353–356 (GGDT) contribute to the ATP site.

The protein belongs to the phosphoglycerate kinase family. Monomer.

The protein localises to the cytoplasm. The enzyme catalyses (2R)-3-phosphoglycerate + ATP = (2R)-3-phospho-glyceroyl phosphate + ADP. Its pathway is carbohydrate degradation; glycolysis; pyruvate from D-glyceraldehyde 3-phosphate: step 2/5. This Rhodospirillum centenum (strain ATCC 51521 / SW) protein is Phosphoglycerate kinase.